We begin with the raw amino-acid sequence, 525 residues long: Serine protease 1 (525 aa).

A signal peptide spans 1–32 (MKCKKPSALFSALALVGALGAASVLGAASANS). A propeptide spanning residues 33–211 (ASPVAAATVQ…TVSDDVIVPV (179 aa)) is cleaved from the precursor. Cysteines 223 and 239 form a disulfide. Active-site charge relay system residues include His-238 and Asp-270. 5 cysteine pairs are disulfide-bonded: Cys-310-Cys-320, Cys-346-Cys-376, Cys-412-Cys-431, Cys-453-Cys-472, and Cys-496-Cys-514. Ser-352 (charge relay system) is an active-site residue. One can recognise a Ricin B-type lectin domain in the interval 396–525 (TSTDVTTSYV…GGANQKWWRR (130 aa)). The essential for the lytic activity, but not for protease function stretch occupies residues 401–525 (TTSYVQGYQN…GGANQKWWRR (125 aa)).

The protein belongs to the peptidase S1 family.

It is found in the secreted. Functionally, major serine protease exhibiting lytic activity toward living yeast cells. Similar to elastase in its substrate specificity and has a lectin-like affinity for mannose. Mannoproteins may be the native substrate for RPI. This is Serine protease 1 from Rarobacter faecitabidus.